Consider the following 476-residue polypeptide: tRNA(Ile)-lysidine synthase (476 aa).

26-31 (SGGSDS) contacts ATP.

The protein belongs to the tRNA(Ile)-lysidine synthase family.

The protein localises to the cytoplasm. The catalysed reaction is cytidine(34) in tRNA(Ile2) + L-lysine + ATP = lysidine(34) in tRNA(Ile2) + AMP + diphosphate + H(+). Functionally, ligates lysine onto the cytidine present at position 34 of the AUA codon-specific tRNA(Ile) that contains the anticodon CAU, in an ATP-dependent manner. Cytidine is converted to lysidine, thus changing the amino acid specificity of the tRNA from methionine to isoleucine. The chain is tRNA(Ile)-lysidine synthase from Bartonella quintana (strain Toulouse) (Rochalimaea quintana).